Reading from the N-terminus, the 161-residue chain is 2-C-methyl-D-erythritol 2,4-cyclodiphosphate synthase (161 aa).

D11 and H13 together coordinate a divalent metal cation. 4-CDP-2-C-methyl-D-erythritol 2-phosphate-binding positions include 11 to 13 (DIH) and 37 to 38 (HS). H45 lines the a divalent metal cation pocket. Residues 59–61 (DIG), 135–138 (TTNE), and R145 contribute to the 4-CDP-2-C-methyl-D-erythritol 2-phosphate site.

The protein belongs to the IspF family. In terms of assembly, homotrimer. It depends on a divalent metal cation as a cofactor.

The catalysed reaction is 4-CDP-2-C-methyl-D-erythritol 2-phosphate = 2-C-methyl-D-erythritol 2,4-cyclic diphosphate + CMP. It participates in isoprenoid biosynthesis; isopentenyl diphosphate biosynthesis via DXP pathway; isopentenyl diphosphate from 1-deoxy-D-xylulose 5-phosphate: step 4/6. In terms of biological role, involved in the biosynthesis of isopentenyl diphosphate (IPP) and dimethylallyl diphosphate (DMAPP), two major building blocks of isoprenoid compounds. Catalyzes the conversion of 4-diphosphocytidyl-2-C-methyl-D-erythritol 2-phosphate (CDP-ME2P) to 2-C-methyl-D-erythritol 2,4-cyclodiphosphate (ME-CPP) with a corresponding release of cytidine 5-monophosphate (CMP). The chain is 2-C-methyl-D-erythritol 2,4-cyclodiphosphate synthase from Cyanothece sp. (strain PCC 7425 / ATCC 29141).